The chain runs to 113 residues: Large ribosomal subunit protein bL19 (113 aa).

It belongs to the bacterial ribosomal protein bL19 family.

This protein is located at the 30S-50S ribosomal subunit interface and may play a role in the structure and function of the aminoacyl-tRNA binding site. The polypeptide is Large ribosomal subunit protein bL19 (Nocardia farcinica (strain IFM 10152)).